Here is a 705-residue protein sequence, read N- to C-terminus: CAP-Gly domain-containing linker protein 4 (705 aa).

ANK repeat units lie at residues Thr65–Asp101, Thr149–Ala180, and Asn186–Phe215. Residues Gly303–Pro345 enclose the CAP-Gly 1 domain. Disordered regions lie at residues Met391–Glu410 and Thr431–Ser479. The span at Pro441–Lys452 shows a compositional bias: polar residues. Low complexity predominate over residues Ser455 to Ser479. The region spanning Gly505–Pro547 is the CAP-Gly 2 domain. A phosphoserine mark is found at Ser557 and Ser609. One can recognise a CAP-Gly 3 domain in the interval Gly644–Arg686.

The protein is CAP-Gly domain-containing linker protein 4 (CLIP4) of Homo sapiens (Human).